Consider the following 370-residue polypeptide: MAISYQLEQTSSESRARLGKLKTPRGEIQTPVFMPVGTQATVKTMTPEELKNLDAEIILGNTYHLHLRPGNDIVREADGLHKFMNWDRPILTDSGGFQVFSLGKLRQISEQGVEFRSHIDGSKLFMTPEKSIEIQEDLGSDIMMVFDECPPYPAEYDYVKESMDRTIRWSKRCLQHQKHPEKQALFGIVQGGMYPELRKESALKTTELDFPGYAVGGLSVGEPKEMMLEVLNTTIPYLPEEKPRYLMGVGTPDYIIEAVRMGIDMFDCVYPTRVARNGTAMTRFGNLTVRNAVFQRDFQPIEEDCDCYVCQNYSRAYLRHLIKANEILGFRLLTWHNLFFLIKLIKELRQAIADDNFLAWRDSFYKNYQN.

Residue Asp-93 is the Proton acceptor of the active site. Residues 93–97, Asp-147, Gln-190, and Gly-217 each bind substrate; that span reads DSGGF. Residues 248 to 254 form an RNA binding region; that stretch reads GVGTPDY. Asp-267 serves as the catalytic Nucleophile. Residues 272-276 form an RNA binding; important for wobble base 34 recognition region; sequence TRVAR. Positions 305, 307, 310, and 336 each coordinate Zn(2+).

The protein belongs to the queuine tRNA-ribosyltransferase family. As to quaternary structure, homodimer. Within each dimer, one monomer is responsible for RNA recognition and catalysis, while the other monomer binds to the replacement base PreQ1. Zn(2+) is required as a cofactor.

It carries out the reaction 7-aminomethyl-7-carbaguanine + guanosine(34) in tRNA = 7-aminomethyl-7-carbaguanosine(34) in tRNA + guanine. Its pathway is tRNA modification; tRNA-queuosine biosynthesis. Functionally, catalyzes the base-exchange of a guanine (G) residue with the queuine precursor 7-aminomethyl-7-deazaguanine (PreQ1) at position 34 (anticodon wobble position) in tRNAs with GU(N) anticodons (tRNA-Asp, -Asn, -His and -Tyr). Catalysis occurs through a double-displacement mechanism. The nucleophile active site attacks the C1' of nucleotide 34 to detach the guanine base from the RNA, forming a covalent enzyme-RNA intermediate. The proton acceptor active site deprotonates the incoming PreQ1, allowing a nucleophilic attack on the C1' of the ribose to form the product. After dissociation, two additional enzymatic reactions on the tRNA convert PreQ1 to queuine (Q), resulting in the hypermodified nucleoside queuosine (7-(((4,5-cis-dihydroxy-2-cyclopenten-1-yl)amino)methyl)-7-deazaguanosine). The chain is Queuine tRNA-ribosyltransferase from Natranaerobius thermophilus (strain ATCC BAA-1301 / DSM 18059 / JW/NM-WN-LF).